The primary structure comprises 338 residues: Nicotinate-nucleotide--dimethylbenzimidazole phosphoribosyltransferase (338 aa).

Glu305 serves as the catalytic Proton acceptor.

Belongs to the CobT family.

It carries out the reaction 5,6-dimethylbenzimidazole + nicotinate beta-D-ribonucleotide = alpha-ribazole 5'-phosphate + nicotinate + H(+). It participates in nucleoside biosynthesis; alpha-ribazole biosynthesis; alpha-ribazole from 5,6-dimethylbenzimidazole: step 1/2. In terms of biological role, catalyzes the synthesis of alpha-ribazole-5'-phosphate from nicotinate mononucleotide (NAMN) and 5,6-dimethylbenzimidazole (DMB). In Rhizobium johnstonii (strain DSM 114642 / LMG 32736 / 3841) (Rhizobium leguminosarum bv. viciae), this protein is Nicotinate-nucleotide--dimethylbenzimidazole phosphoribosyltransferase.